Reading from the N-terminus, the 159-residue chain is Small ribosomal subunit protein uS7c (159 aa).

A disordered region spans residues 137-159; it reads HAIRKKEETHKMAESNRAXAHYR. Over residues 141-150 the composition is skewed to basic and acidic residues; sequence KKEETHKMAE.

It belongs to the universal ribosomal protein uS7 family. As to quaternary structure, part of the 30S ribosomal subunit.

It localises to the plastid. It is found in the chloroplast. Functionally, one of the primary rRNA binding proteins, it binds directly to 16S rRNA where it nucleates assembly of the head domain of the 30S subunit. The polypeptide is Small ribosomal subunit protein uS7c (rps7) (Sciadopitys verticillata (Japanese umbrella-pine)).